Consider the following 117-residue polypeptide: Large ribosomal subunit protein uL18 (117 aa).

Belongs to the universal ribosomal protein uL18 family. In terms of assembly, part of the 50S ribosomal subunit; part of the 5S rRNA/L5/L18/L25 subcomplex. Contacts the 5S and 23S rRNAs.

Its function is as follows. This is one of the proteins that bind and probably mediate the attachment of the 5S RNA into the large ribosomal subunit, where it forms part of the central protuberance. The sequence is that of Large ribosomal subunit protein uL18 from Serratia proteamaculans (strain 568).